Consider the following 554-residue polypeptide: MDSDQTPLINPSLFEECAQNHFAAADSRSRRPFHIEPSYITSINDDEPQRITSEASAMNKRIHYYSKLSYPSGGGLIAPDHVLPAPEEIYVYSPLGTALKIDGSDGSEKNSSIVTIFMIWNTMMGTSILSIPWGIKQAGFTTGVCVLFLMGILTLYCCYRVVKSRGTIPLTDTSTWEFPDVCQYYFGSFGRWSSLLFSMVSLIGAMIVYWVLMSNFLFNTGKFIYNYVNDVNITDDVLSNNGTDKVICPNPDSTGPLNKSMDTYYGNGTNLEHFETWWSKTNTVPFYLVVLLLPLLGFRSPSFFAKFNILGTVSIIYLVSLVTLKAAHLGFHLQFSWNQVQTFFVPEFRVSFPQLTGILTLAFFIHNCIITLLKNNRNQKNNVRDLSIAYLLVGLTYVYVGVVVFASFPSPPLSKQCIEQNFLDNFPSSDILAFVARIFLLFQMMTVYPLLGYLVRVQLLGHIFGDIYPSIFHVLALNIAVVGVGVIMARFYPNIGGIIRFSGAACGLAFVFVYPSLIHMISLHRRGQLRIHSILIHVSIIVLGISNLIAQFFM.

Topologically, residues 1–112 are cytoplasmic; it reads MDSDQTPLIN…GSDGSEKNSS (112 aa). A helical membrane pass occupies residues 113–133; that stretch reads IVTIFMIWNTMMGTSILSIPW. An important for arginine binding and amino acid transport region spans residues 122–127; that stretch reads TMMGTS. Ser127 contributes to the arginine binding site. Residues 134–139 lie on the Lumenal side of the membrane; the sequence is GIKQAG. The chain crosses the membrane as a helical span at residues 140-160; that stretch reads FTTGVCVLFLMGILTLYCCYR. Residues 161-191 lie on the Cytoplasmic side of the membrane; it reads VVKSRGTIPLTDTSTWEFPDVCQYYFGSFGR. The helical transmembrane segment at 192 to 218 threads the bilayer; that stretch reads WSSLLFSMVSLIGAMIVYWVLMSNFLF. Residues 219 to 276 lie on the Lumenal side of the membrane; sequence NTGKFIYNYVNDVNITDDVLSNNGTDKVICPNPDSTGPLNKSMDTYYGNGTNLEHFET. N-linked (GlcNAc...) asparagine glycans are attached at residues Asn232, Asn241, Asn258, and Asn267. Cys248 and Cys417 form a disulfide bridge. A helical transmembrane segment spans residues 277 to 293; sequence WWSKTNTVPFYLVVLLL. Residues 294–302 lie on the Cytoplasmic side of the membrane; sequence PLLGFRSPS. The chain crosses the membrane as a helical span at residues 303–327; it reads FFAKFNILGTVSIIYLVSLVTLKAA. Residues 328-349 are Lumenal-facing; it reads HLGFHLQFSWNQVQTFFVPEFR. Residues 350-370 traverse the membrane as a helical segment; the sequence is VSFPQLTGILTLAFFIHNCII. Residues 371 to 387 lie on the Cytoplasmic side of the membrane; that stretch reads TLLKNNRNQKNNVRDLS. A helical transmembrane segment spans residues 388–408; that stretch reads IAYLLVGLTYVYVGVVVFASF. Residues 409–430 are Lumenal-facing; the sequence is PSPPLSKQCIEQNFLDNFPSSD. A helical membrane pass occupies residues 431–451; the sequence is ILAFVARIFLLFQMMTVYPLL. The short motif at 437–447 is the CARC motif element; it reads RIFLLFQMMTV. The short motif at 450-456 is the CRAC motif element; the sequence is LLGYLVR. At 452–472 the chain is on the cytoplasmic side; that stretch reads GYLVRVQLLGHIFGDIYPSIF. The chain crosses the membrane as a helical span at residues 473 to 493; sequence HVLALNIAVVGVGVIMARFYP. The Lumenal portion of the chain corresponds to 494–500; the sequence is NIGGIIR. The chain crosses the membrane as a helical span at residues 501-521; sequence FSGAACGLAFVFVYPSLIHMI. At 522-533 the chain is on the cytoplasmic side; the sequence is SLHRRGQLRIHS. A helical membrane pass occupies residues 534-554; that stretch reads ILIHVSIIVLGISNLIAQFFM.

The protein belongs to the amino acid/polyamine transporter 2 family. SLC38A9 subfamily. As to quaternary structure, associated component of the Ragulator complex. Associated component of the Rag GTPases heterodimers. Glycosylated.

The protein localises to the lysosome membrane. Its subcellular location is the late endosome membrane. The enzyme catalyses L-leucine(in) = L-leucine(out). It catalyses the reaction L-tyrosine(in) = L-tyrosine(out). The catalysed reaction is L-glutamine(out) = L-glutamine(in). It carries out the reaction L-asparagine(out) = L-asparagine(in). Functionally, lysosomal amino acid transporter involved in the activation of mTORC1 in response to amino acid levels. Probably acts as an amino acid sensor of the Rag GTPases and Ragulator complexes, 2 complexes involved in amino acid sensing and activation of mTORC1, a signaling complex promoting cell growth in response to growth factors, energy levels, and amino acids. Following activation by amino acids, the Ragulator and Rag GTPases function as a scaffold recruiting mTORC1 to lysosomes where it is in turn activated. SLC38A9 mediates transport of amino acids with low capacity and specificity with a slight preference for polar amino acids. Acts as an arginine sensor. Following activation by arginine binding, mediates transport of L-glutamine, leucine and tyrosine with high efficiency, and is required for the efficient utilization of these amino acids after lysosomal protein degradation. However, the transport mechanism is not well defined and the role of sodium is not clear. Guanine exchange factor (GEF) that, upon arginine binding, stimulates GDP release from RRAGA and therefore activates the Rag GTPase heterodimer and the mTORC1 pathway in response to nutrient sufficiency. The polypeptide is Neutral amino acid transporter 9 (Xenopus laevis (African clawed frog)).